The primary structure comprises 308 residues: Aspartate carbamoyltransferase catalytic subunit (308 aa).

R57 and T58 together coordinate carbamoyl phosphate. K86 serves as a coordination point for L-aspartate. Residues R107, H135, and Q138 each contribute to the carbamoyl phosphate site. 2 residues coordinate L-aspartate: R167 and R228. Carbamoyl phosphate is bound by residues L267 and P268.

The protein belongs to the aspartate/ornithine carbamoyltransferase superfamily. ATCase family. Heterooligomer of catalytic and regulatory chains.

The catalysed reaction is carbamoyl phosphate + L-aspartate = N-carbamoyl-L-aspartate + phosphate + H(+). It functions in the pathway pyrimidine metabolism; UMP biosynthesis via de novo pathway; (S)-dihydroorotate from bicarbonate: step 2/3. Catalyzes the condensation of carbamoyl phosphate and aspartate to form carbamoyl aspartate and inorganic phosphate, the committed step in the de novo pyrimidine nucleotide biosynthesis pathway. The chain is Aspartate carbamoyltransferase catalytic subunit from Methanosarcina acetivorans (strain ATCC 35395 / DSM 2834 / JCM 12185 / C2A).